The chain runs to 568 residues: Urease subunit alpha (568 aa).

Residues 130–568 enclose the Urease domain; the sequence is GGIDTHIHFI…LPMAQRYFLF (439 aa). Ni(2+) is bound by residues His135, His137, and Lys218. Lys218 bears the N6-carboxylysine mark. His220 lines the substrate pocket. Ni(2+)-binding residues include His247 and His273. His321 functions as the Proton donor in the catalytic mechanism. Asp361 is a Ni(2+) binding site.

This sequence belongs to the metallo-dependent hydrolases superfamily. Urease alpha subunit family. In terms of assembly, heterotrimer of UreA (gamma), UreB (beta) and UreC (alpha) subunits. Three heterotrimers associate to form the active enzyme. Ni cation is required as a cofactor. Carboxylation allows a single lysine to coordinate two nickel ions.

The protein resides in the cytoplasm. It catalyses the reaction urea + 2 H2O + H(+) = hydrogencarbonate + 2 NH4(+). It functions in the pathway nitrogen metabolism; urea degradation; CO(2) and NH(3) from urea (urease route): step 1/1. In Burkholderia multivorans (strain ATCC 17616 / 249), this protein is Urease subunit alpha.